A 421-amino-acid chain; its full sequence is Gamma-glutamyl phosphate reductase (421 aa).

This sequence belongs to the gamma-glutamyl phosphate reductase family.

The protein localises to the cytoplasm. It catalyses the reaction L-glutamate 5-semialdehyde + phosphate + NADP(+) = L-glutamyl 5-phosphate + NADPH + H(+). It participates in amino-acid biosynthesis; L-proline biosynthesis; L-glutamate 5-semialdehyde from L-glutamate: step 2/2. Its function is as follows. Catalyzes the NADPH-dependent reduction of L-glutamate 5-phosphate into L-glutamate 5-semialdehyde and phosphate. The product spontaneously undergoes cyclization to form 1-pyrroline-5-carboxylate. The polypeptide is Gamma-glutamyl phosphate reductase (Roseobacter denitrificans (strain ATCC 33942 / OCh 114) (Erythrobacter sp. (strain OCh 114))).